Consider the following 222-residue polypeptide: Type II restriction enzyme AbrI (222 aa).

Disordered stretches follow at residues 21-45 (GNRE…RRDR) and 161-222 (NQRR…SPRI). A compositionally biased stretch (basic and acidic residues) spans 22–42 (NREKARQKQQESGKPDQGERR). The segment covering 188 to 202 (SSASGSSRSSFTPRP) has biased composition (low complexity).

The protein belongs to the XhoI type II restriction endonuclease family.

It catalyses the reaction Endonucleolytic cleavage of DNA to give specific double-stranded fragments with terminal 5'-phosphates.. Its function is as follows. A P subtype restriction enzyme that recognizes the double-stranded sequence 5'-CTCGAG-3' and cleaves after C-1. The protein is Type II restriction enzyme AbrI (abrIR) of Azospirillum brasilense.